A 319-amino-acid chain; its full sequence is GTP cyclohydrolase MptA (319 aa).

It belongs to the GTP cyclohydrolase IV family. Homodimer. Fe(2+) is required as a cofactor.

It carries out the reaction GTP + H2O = 7,8-dihydroneopterin 2',3'-cyclic phosphate + formate + diphosphate + H(+). It participates in cofactor biosynthesis; 5,6,7,8-tetrahydromethanopterin biosynthesis. Converts GTP to 7,8-dihydro-D-neopterin 2',3'-cyclic phosphate, the first intermediate in the biosynthesis of coenzyme methanopterin. This chain is GTP cyclohydrolase MptA, found in Methanosarcina barkeri (strain Fusaro / DSM 804).